Reading from the N-terminus, the 328-residue chain is Biotin synthase (328 aa).

The 220-residue stretch at 41-260 (TAIETASLLS…VALARILMPA (220 aa)) folds into the Radical SAM core domain. [4Fe-4S] cluster contacts are provided by cysteine 56, cysteine 60, and cysteine 63. [2Fe-2S] cluster contacts are provided by cysteine 100, cysteine 131, cysteine 191, and arginine 264.

This sequence belongs to the radical SAM superfamily. Biotin synthase family. As to quaternary structure, homodimer. The cofactor is [4Fe-4S] cluster. It depends on [2Fe-2S] cluster as a cofactor.

It catalyses the reaction (4R,5S)-dethiobiotin + (sulfur carrier)-SH + 2 reduced [2Fe-2S]-[ferredoxin] + 2 S-adenosyl-L-methionine = (sulfur carrier)-H + biotin + 2 5'-deoxyadenosine + 2 L-methionine + 2 oxidized [2Fe-2S]-[ferredoxin]. The protein operates within cofactor biosynthesis; biotin biosynthesis; biotin from 7,8-diaminononanoate: step 2/2. Catalyzes the conversion of dethiobiotin (DTB) to biotin by the insertion of a sulfur atom into dethiobiotin via a radical-based mechanism. In Cereibacter sphaeroides (strain ATCC 17029 / ATH 2.4.9) (Rhodobacter sphaeroides), this protein is Biotin synthase.